The primary structure comprises 124 residues: Glycine cleavage system H protein (124 aa).

In terms of domain architecture, Lipoyl-binding spans 22-104 (TATVGITDFA…YGDGWMIEIE (83 aa)). Position 63 is an N6-lipoyllysine (lysine 63).

Belongs to the GcvH family. In terms of assembly, the glycine cleavage system is composed of four proteins: P, T, L and H. It depends on (R)-lipoate as a cofactor.

Functionally, the glycine cleavage system catalyzes the degradation of glycine. The H protein shuttles the methylamine group of glycine from the P protein to the T protein. The chain is Glycine cleavage system H protein from Salinibacter ruber (strain DSM 13855 / M31).